Here is a 319-residue protein sequence, read N- to C-terminus: Ornithine carbamoyltransferase (319 aa).

Carbamoyl phosphate is bound by residues 55-58 (STRT), Gln-82, Arg-106, and 133-136 (HPCQ). Residues Asn-171, Asp-234, and 238–239 (SM) each bind L-ornithine. Residues 274 to 275 (CL) and Arg-302 contribute to the carbamoyl phosphate site.

This sequence belongs to the aspartate/ornithine carbamoyltransferase superfamily. OTCase family.

Its subcellular location is the cytoplasm. The enzyme catalyses carbamoyl phosphate + L-ornithine = L-citrulline + phosphate + H(+). It functions in the pathway amino-acid biosynthesis; L-arginine biosynthesis; L-arginine from L-ornithine and carbamoyl phosphate: step 1/3. Its function is as follows. Reversibly catalyzes the transfer of the carbamoyl group from carbamoyl phosphate (CP) to the N(epsilon) atom of ornithine (ORN) to produce L-citrulline. The chain is Ornithine carbamoyltransferase from Corynebacterium diphtheriae (strain ATCC 700971 / NCTC 13129 / Biotype gravis).